The chain runs to 420 residues: Na(+)/H(+) antiporter NhaA (420 aa).

The next 11 membrane-spanning stretches (helical) occupy residues 4-24, 70-90, 104-124, 132-152, 165-185, 192-212, 233-250, 299-319, 323-343, 361-381, and 395-415; these read VWNF…IALI, DLLM…AVIL, LVAT…IAYF, AVAN…YLVG, FLLL…AIFY, PAWL…ANWL, LSFW…YGFM, VEII…SAMG, WLVL…FGWL, LVVI…VASV, and GALF…LTQV.

It belongs to the NhaA Na(+)/H(+) (TC 2.A.33) antiporter family.

It localises to the cell inner membrane. The catalysed reaction is Na(+)(in) + 2 H(+)(out) = Na(+)(out) + 2 H(+)(in). Functionally, na(+)/H(+) antiporter that extrudes sodium in exchange for external protons. The sequence is that of Na(+)/H(+) antiporter NhaA from Jannaschia sp. (strain CCS1).